The primary structure comprises 586 residues: Membrane protein insertase YidC (586 aa).

5 consecutive transmembrane segments (helical) span residues 5–25 (TLIGLVLIALIMMAWFQLMAP), 371–391 (GVIIILFALFIKLVTYPLTMA), 436–456 (LGGCLPTVIQMPLLFAMFYVF), 486–506 (IPLYGDHVSVIPILMGVAVFF), and 522–542 (FMMYLFPGMMLIFFNNMPSGL).

This sequence belongs to the OXA1/ALB3/YidC family. Type 1 subfamily. Interacts with the Sec translocase complex via SecD. Specifically interacts with transmembrane segments of nascent integral membrane proteins during membrane integration.

It localises to the cell inner membrane. Functionally, required for the insertion and/or proper folding and/or complex formation of integral membrane proteins into the membrane. Involved in integration of membrane proteins that insert both dependently and independently of the Sec translocase complex, as well as at least some lipoproteins. Aids folding of multispanning membrane proteins. The polypeptide is Membrane protein insertase YidC (Chloroherpeton thalassium (strain ATCC 35110 / GB-78)).